The following is a 311-amino-acid chain: MFQHKTVLLRETVDGLNIKPDGTYVDCTLGGAGHSTYLLQQLSEKGRLIAFDQDDTALQHAKEVLSDYKGQLILIKSNFRYLKEYLNEQGVTEVDGILFDLGVSSPQLDTPERGFSYHHDAPLDMRMDQSATLSAKEVVNEWRYEDLVRIFFKYGEEKFSKQIARKIEEARMKSPIQTTGQLVDLIKDAIPAPARRSGGHPAKRVFQAIRIAVNDELRVFEEALEQAIEVLKPGGRVSVITFHSLEDRICKTTFKEKSSLPELPPGLPVIPEEFEPELKLITRKPITASQEELEENNRARSAKLRIAEKRK.

S-adenosyl-L-methionine contacts are provided by residues 32-34 (AGH), Asp-52, Phe-79, Asp-100, and Gln-107. The segment at 287–311 (TASQEELEENNRARSAKLRIAEKRK) is disordered. Positions 300–311 (RSAKLRIAEKRK) are enriched in basic residues.

This sequence belongs to the methyltransferase superfamily. RsmH family.

The protein resides in the cytoplasm. The catalysed reaction is cytidine(1402) in 16S rRNA + S-adenosyl-L-methionine = N(4)-methylcytidine(1402) in 16S rRNA + S-adenosyl-L-homocysteine + H(+). Specifically methylates the N4 position of cytidine in position 1402 (C1402) of 16S rRNA. The sequence is that of Ribosomal RNA small subunit methyltransferase H from Bacillus subtilis (strain 168).